The chain runs to 93 residues: Small ribosomal subunit protein uS19 (93 aa).

This sequence belongs to the universal ribosomal protein uS19 family.

Functionally, protein S19 forms a complex with S13 that binds strongly to the 16S ribosomal RNA. The chain is Small ribosomal subunit protein uS19 from Renibacterium salmoninarum (strain ATCC 33209 / DSM 20767 / JCM 11484 / NBRC 15589 / NCIMB 2235).